The sequence spans 253 residues: Snake venom serine proteinase 14 (253 aa).

An N-terminal signal peptide occupies residues 1-18; sequence MVLIRVLANLLILQLSYA. Positions 19 to 24 are excised as a propeptide; the sequence is QKSSEL. In terms of domain architecture, Peptidase S1 spans 25-244; that stretch reads VIGGDECNIN…YTDWIQSIIA (220 aa). 6 disulfide bridges follow: C31-C158, C49-C65, C93-C251, C137-C205, C169-C184, and C195-C220. Catalysis depends on charge relay system residues H64 and D105. N-linked (GlcNAc...) asparagine glycans are attached at residues N116, N117, and N149. The active-site Charge relay system is S199.

Belongs to the peptidase S1 family. Snake venom subfamily. In terms of assembly, monomer. Expressed by the venom gland.

It localises to the secreted. Functionally, snake venom serine protease that may act in the hemostasis system of the prey. This chain is Snake venom serine proteinase 14, found in Crotalus adamanteus (Eastern diamondback rattlesnake).